A 222-amino-acid polypeptide reads, in one-letter code: Thiopurine S-methyltransferase (222 aa).

4 residues coordinate S-adenosyl-L-methionine: tryptophan 10, leucine 45, glutamate 66, and arginine 126.

This sequence belongs to the class I-like SAM-binding methyltransferase superfamily. TPMT family.

Its subcellular location is the cytoplasm. The catalysed reaction is S-adenosyl-L-methionine + a thiopurine = S-adenosyl-L-homocysteine + a thiopurine S-methylether.. The sequence is that of Thiopurine S-methyltransferase from Shewanella piezotolerans (strain WP3 / JCM 13877).